The sequence spans 192 residues: Pyruvate kinase (192 aa).

Substrate is bound at residue Arg-41. Asn-43, Ser-45, Asp-75, and Thr-76 together coordinate K(+). ATP is bound at residue 43 to 46 (NFSH).

The protein belongs to the pyruvate kinase family. It depends on Mg(2+) as a cofactor. The cofactor is K(+).

It carries out the reaction pyruvate + ATP = phosphoenolpyruvate + ADP + H(+). The protein operates within carbohydrate degradation; glycolysis; pyruvate from D-glyceraldehyde 3-phosphate: step 5/5. In Spiroplasma citri, this protein is Pyruvate kinase (pyk).